The chain runs to 257 residues: UPF0246 protein KPK_4750 (257 aa).

It belongs to the UPF0246 family.

This is UPF0246 protein KPK_4750 from Klebsiella pneumoniae (strain 342).